A 202-amino-acid chain; its full sequence is MGEMVRIAVVHDEKLLRSALVQLLRSDDTLDVSSHCLDADGPELSAALPADVCVVDGECLTGPEDAGAGRLRARYGDRLVVLATAKRPGVLRRAFDGGALGLVDKNAPAHRLITAVHTVARGERFLDETLTVALLKGAEMPLTTRELGVLTLASQGAPIAEIAARLHLSRGTVRNYMATAVRKVGARNRVDAIRIVQSAGWT.

Residues 1 to 121 (MGEMVRIAVV…LITAVHTVAR (121 aa)) are response regulatory. An HTH luxR-type domain is found at 135–200 (LKGAEMPLTT…DAIRIVQSAG (66 aa)). Residues 159–178 (IAEIAARLHLSRGTVRNYMA) constitute a DNA-binding region (H-T-H motif).

In terms of assembly, homodimer, in the absence of phosphorylation. In terms of processing, may be phosphorylated by an unknown kinase, probably on Asp-56.

A transcription factor required for aerial hyphae formation on rich medium. Activates transcription of ramC. Might be part of a two-component regulatory system. Binds the promoter of ramC. Non-phosphorylated protein cooperatively binds multiple sites in the ramC promoter. Has not been seen to autophosphorylate using the small molecule phosphodonors phosphoramidate, acetyl phosphate or carbamoyl phosphate. Upon low expression suppresses the bald (bld, no aerial hyphae) phenotype of citA but not bldJ mutants; higher expression also suppresses the bldJ mutant as well as several other bld mutations, inducing SapB production even on media where SapB is normally not produced. Expression of the ram locus (ramA, ramB and ramR) induces rapid aerial mycelium formation in S.lividans. Overexpression suppresses the no aerial hyphae phenotype of a chaplin-negative strain, probably by inducing expression of SapB. Overexpression of RamR show there are about 280 genes having at least a threefold increase or fourfold decrease in RNA abundance versus wild-type including gene cluster SCO4072-SCO4075. The polypeptide is Response regulator RamR (Streptomyces coelicolor (strain ATCC BAA-471 / A3(2) / M145)).